The following is an 885-amino-acid chain: Protein transport protein SEC24-1 (885 aa).

Residues Cys164, Cys167, Cys186, and Cys189 each contribute to the Zn(2+) site. The segment at 164 to 189 (CRRCRSYLNPFVAFIEQGRRWQCNIC) is zinc finger-like. The tract at residues 296–332 (DDYEESDDDDDEDDDDEEEDNEEEEEEEEDEEDDDDS) is disordered.

Belongs to the SEC23/SEC24 family. SEC24 subfamily. As to quaternary structure, the COPII coat is composed of at least 5 proteins: the SEC23/24 complex, the SEC13/31 complex, and the protein SAR1. Golgi apparatus membrane; Peripheral membrane protein; Cytoplasmic side.

The protein localises to the cytoplasm. It localises to the cytoplasmic vesicle. The protein resides in the COPII-coated vesicle membrane. Its subcellular location is the endoplasmic reticulum membrane. It is found in the golgi apparatus membrane. Functionally, component of the coat protein complex II (COPII) which promotes the formation of transport vesicles from the endoplasmic reticulum (ER). The coat has two main functions, the physical deformation of the endoplasmic reticulum membrane into vesicles and the selection of cargo molecules. The polypeptide is Protein transport protein SEC24-1 (SEC241) (Saccharomyces uvarum (strain ATCC 76518 / CBS 7001 / CLIB 283 / NBRC 10550 / MCYC 623 / NCYC 2669 / NRRL Y-11845) (Yeast)).